The following is a 337-amino-acid chain: uncharacterized protein (337 aa).

2 helical membrane-spanning segments follow: residues 4-24 (FIFF…FSLI) and 26-46 (LLLW…LFVL).

This sequence belongs to the plectrovirus ORF2 family.

The protein resides in the host membrane. This is an uncharacterized protein from Spiroplasma virus SpV1-R8A2 B (SpV1).